The primary structure comprises 201 residues: Small ribosomal subunit protein uS4c (201 aa).

Positions 19–38 (PGLTSKSPKAGSDLRNQLRS) are disordered. The S4 RNA-binding domain maps to 89–149 (MRLDNILFRL…DEQKSRALIQ (61 aa)).

Belongs to the universal ribosomal protein uS4 family. As to quaternary structure, part of the 30S ribosomal subunit. Contacts protein S5. The interaction surface between S4 and S5 is involved in control of translational fidelity.

The protein localises to the plastid. It localises to the chloroplast. Functionally, one of the primary rRNA binding proteins, it binds directly to 16S rRNA where it nucleates assembly of the body of the 30S subunit. Its function is as follows. With S5 and S12 plays an important role in translational accuracy. In Platanus occidentalis (Sycamore), this protein is Small ribosomal subunit protein uS4c (rps4).